The chain runs to 42 residues: Beta-2-microglobulin (42 aa).

Positions 5–42 (PKIQVYSRHPAZBGKPBFLBCYVSGFHPXZIZIBLLKB) constitute an Ig-like C1-type domain.

As to quaternary structure, heterodimer of an alpha chain and a beta chain. Beta-2-microglobulin is the beta-chain of major histocompatibility complex class I molecules.

It is found in the secreted. Functionally, component of the class I major histocompatibility complex (MHC). Involved in the presentation of peptide antigens to the immune system. The protein is Beta-2-microglobulin (B2M) of Canis lupus familiaris (Dog).